The primary structure comprises 1386 residues: X-linked retinitis pigmentosa GTPase regulator homolog (1386 aa).

Disordered regions lie at residues 1 to 25 (MFFKRSTNSRKTSANSSSDTSTSSE), 37 to 56 (AGARSQKGSVHRQSGKKARR), and 730 to 760 (MPQMNAKSKRSDSVTNGAPTLPPPAPKPEQH). A compositionally biased stretch (low complexity) spans 9 to 25 (SRKTSANSSSDTSTSSE). Residues 45 to 56 (SVHRQSGKKARR) show a composition bias toward basic residues. RCC1 repeat units follow at residues 737 to 787 (SKRS…VLSS), 788 to 838 (SGQL…FICS), 839 to 891 (DGSL…VLTD), and 893 to 943 (GRVL…CITE). Residues 972 to 994 (LKNTEDPSSPSPSTNGSTPRVNL) form a disordered region. 2 RCC1 repeats span residues 1034-1085 (EGTL…ASTD) and 1087-1139 (GSVF…FVQK).

Its function is as follows. Could be a guanine-nucleotide releasing factor for glo-1. May play a role in gut granule biogenesis. Regulates axon termination in PLM and ALM neurons. In Caenorhabditis elegans, this protein is X-linked retinitis pigmentosa GTPase regulator homolog (glo-4).